Reading from the N-terminus, the 464-residue chain is ATP synthase subunit beta 2 (464 aa).

153–160 (GGAGVGKT) provides a ligand contact to ATP.

The protein belongs to the ATPase alpha/beta chains family. In terms of assembly, F-type ATPases have 2 components, CF(1) - the catalytic core - and CF(0) - the membrane proton channel. CF(1) has five subunits: alpha(3), beta(3), gamma(1), delta(1), epsilon(1). CF(0) has three main subunits: a(1), b(2) and c(9-12). The alpha and beta chains form an alternating ring which encloses part of the gamma chain. CF(1) is attached to CF(0) by a central stalk formed by the gamma and epsilon chains, while a peripheral stalk is formed by the delta and b chains.

It localises to the cell inner membrane. It carries out the reaction ATP + H2O + 4 H(+)(in) = ADP + phosphate + 5 H(+)(out). Its function is as follows. Produces ATP from ADP in the presence of a proton gradient across the membrane. The catalytic sites are hosted primarily by the beta subunits. This is ATP synthase subunit beta 2 from Paraburkholderia xenovorans (strain LB400).